The following is a 158-amino-acid chain: NADH-quinone oxidoreductase subunit B (158 aa).

4 residues coordinate [4Fe-4S] cluster: cysteine 37, cysteine 38, cysteine 102, and cysteine 132.

Belongs to the complex I 20 kDa subunit family. NDH-1 is composed of 14 different subunits. Subunits NuoB, C, D, E, F, and G constitute the peripheral sector of the complex. The cofactor is [4Fe-4S] cluster.

Its subcellular location is the cell inner membrane. It catalyses the reaction a quinone + NADH + 5 H(+)(in) = a quinol + NAD(+) + 4 H(+)(out). Functionally, NDH-1 shuttles electrons from NADH, via FMN and iron-sulfur (Fe-S) centers, to quinones in the respiratory chain. Couples the redox reaction to proton translocation (for every two electrons transferred, four hydrogen ions are translocated across the cytoplasmic membrane), and thus conserves the redox energy in a proton gradient. The protein is NADH-quinone oxidoreductase subunit B of Methylobacillus flagellatus (strain ATCC 51484 / DSM 6875 / VKM B-1610 / KT).